A 1414-amino-acid polypeptide reads, in one-letter code: Phenyloxazoline synthase MbtB (1414 aa).

Residues 5-78 (TACSEIIRAE…AWSQLVSAGT (74 aa)) form the Carrier 1 domain. Ser39 is subject to O-(pantetheine 4'-phosphoryl)serine. The segment at 96-394 (EGEPFPVAPM…SSLLLDVDLT (299 aa)) is condensation/cyclization. Residues 579 to 975 (SYAQLRDQAS…RLPGVHAAAA (397 aa)) are adenylation. The Carrier 2 domain occupies 1057–1135 (APRTVLQRAL…ALAQLLTGRE (79 aa)). Ser1094 bears the O-(pantetheine 4'-phosphoryl)serine mark. The segment at 1188–1413 (GAVLVFPHAG…AVARMVSADV (226 aa)) is thioesterase.

Belongs to the ATP-dependent AMP-binding enzyme family. MbtB subfamily. Pantetheine 4'-phosphate serves as cofactor. 4'-phosphopantetheine is transferred from CoA to a specific serine in each of the two carrier protein domains, leading to their activation from apo to holo forms.

The protein operates within siderophore biosynthesis; mycobactin biosynthesis. Its function is as follows. Involved in the initial steps of the mycobactin biosynthetic pathway. Putatively couples activated salicylic acid with serine or threonine and cyclizes this precursor to the hydroxyphenyloxazoline ring system present in this class of siderophores. Essential for growth in macrophages. In Mycobacterium tuberculosis (strain CDC 1551 / Oshkosh), this protein is Phenyloxazoline synthase MbtB (mbtB).